The primary structure comprises 139 residues: Protein cornichon homolog 4 (139 aa).

3 consecutive transmembrane segments (helical) span residues 5–25, 57–77, and 118–138; these read VFVF…YFII, LVTV…NLPV, and LGFH…ALIN.

It belongs to the cornichon family. Interacts with Sec23/24 complex components SEC24B and SEC24D. Interacts with CCR5. Interacts with ADRB2 in the early secretory pathway.

The protein localises to the membrane. The protein resides in the endoplasmic reticulum. It localises to the endoplasmic reticulum-Golgi intermediate compartment. Functionally, involved in G protein-coupled receptors (GPCRs) trafficking from the endoplasmic reticulum to the cell surface; it promotes the exit of GPCRs from the early secretory pathway, likely through interaction with the COPII machinery. The polypeptide is Protein cornichon homolog 4 (CNIH4) (Bos taurus (Bovine)).